The chain runs to 159 residues: Putative ribosomal RNA large subunit methyltransferase H (159 aa).

S-adenosyl-L-methionine is bound by residues Leu-76, Gly-108, and 127 to 132 (FSKMTF).

It belongs to the RNA methyltransferase RlmH family.

The protein resides in the cytoplasm. It carries out the reaction pseudouridine(1915) in 23S rRNA + S-adenosyl-L-methionine = N(3)-methylpseudouridine(1915) in 23S rRNA + S-adenosyl-L-homocysteine + H(+). In terms of biological role, specifically methylates the pseudouridine at position 1915 (m3Psi1915) in 23S rRNA. The polypeptide is Putative ribosomal RNA large subunit methyltransferase H (Methanococcus maripaludis (strain C6 / ATCC BAA-1332)).